We begin with the raw amino-acid sequence, 901 residues long: Protein translocase subunit SecA (901 aa).

Residues Gln-87, 105–109 (GEGKT), and Asp-512 each bind ATP. Positions 885, 887, 896, and 897 each coordinate Zn(2+).

This sequence belongs to the SecA family. In terms of assembly, monomer and homodimer. Part of the essential Sec protein translocation apparatus which comprises SecA, SecYEG and auxiliary proteins SecDF-YajC and YidC. The cofactor is Zn(2+).

The protein localises to the cell inner membrane. The protein resides in the cytoplasm. It carries out the reaction ATP + H2O + cellular proteinSide 1 = ADP + phosphate + cellular proteinSide 2.. In terms of biological role, part of the Sec protein translocase complex. Interacts with the SecYEG preprotein conducting channel. Has a central role in coupling the hydrolysis of ATP to the transfer of proteins into and across the cell membrane, serving both as a receptor for the preprotein-SecB complex and as an ATP-driven molecular motor driving the stepwise translocation of polypeptide chains across the membrane. This chain is Protein translocase subunit SecA, found in Salmonella paratyphi B (strain ATCC BAA-1250 / SPB7).